The primary structure comprises 568 residues: MARVEL domain-containing protein 2 (568 aa).

2 disordered regions span residues 1-72 and 116-163; these read MSGG…YPSD and SGGV…SYNS. Over 1 to 211 the chain is Cytoplasmic; it reads MSGGGSSSGP…YMKSWAGLLR (211 aa). A compositionally biased stretch (basic and acidic residues) spans 29–46; the sequence is ADPRHPETNLETLHDRDL. Residues 52-62 show a composition bias toward pro residues; the sequence is PLPPPPLPLHP. An MARVEL domain is found at 205-379; the sequence is SWAGLLRILC…SAMVSLKLWR (175 aa). Residues 212 to 232 form a helical membrane-spanning segment; that stretch reads ILCIVELLLGAAVFACVTAYI. At 233–266 the chain is on the extracellular side; the sequence is HKDNEWYNMFGYSQPYGYTASMQGGYYYSGPKTP. Residues 267 to 287 traverse the membrane as a helical segment; that stretch reads FVLVVAGLAWIVTIILLVLGM. The Cytoplasmic portion of the chain corresponds to 288–303; it reads SMYYRTILLDSTWWPL. Residues 304 to 324 traverse the membrane as a helical segment; that stretch reads TEFGINISLFILYMAGAIVYV. Over 325–354 the chain is Extracellular; sequence NDTNRGGLCYYQLFNTPVNASFCRVEGGQT. A helical transmembrane segment spans residues 355–375; it reads AAIIFLFVSMLMYFISAMVSL. Over 376-568 the chain is Cytoplasmic; sequence KLWRHESARK…KVMDWNDGYN (193 aa). The OCEL domain occupies 451–562; the sequence is PDYVAKYQAI…RIQEYDKVMD (112 aa). Residues 462-559 adopt a coiled-coil conformation; that stretch reads AEDERERYKA…IKQRIQEYDK (98 aa).

The protein belongs to the ELL/occludin family.

It is found in the cell membrane. The protein resides in the cell junction. It localises to the tight junction. Functionally, may play a role in the formation of the epithelial barrier. This is MARVEL domain-containing protein 2 (marveld2) from Xenopus tropicalis (Western clawed frog).